Here is a 349-residue protein sequence, read N- to C-terminus: tRNA pseudouridine synthase D (349 aa).

Phe27 contacts substrate. The active-site Nucleophile is Asp80. Residue Asn129 coordinates substrate. Residues 155–303 enclose the TRUD domain; that stretch reads GVPNYFGAQR…VEAARRAMLL (149 aa). Phe329 lines the substrate pocket.

It belongs to the pseudouridine synthase TruD family.

The enzyme catalyses uridine(13) in tRNA = pseudouridine(13) in tRNA. Its function is as follows. Responsible for synthesis of pseudouridine from uracil-13 in transfer RNAs. The protein is tRNA pseudouridine synthase D of Escherichia coli O81 (strain ED1a).